Here is a 505-residue protein sequence, read N- to C-terminus: ATP synthase subunit alpha (505 aa).

170 to 177 (GDRQTGKT) serves as a coordination point for ATP.

The protein belongs to the ATPase alpha/beta chains family. In terms of assembly, F-type ATPases have 2 components, CF(1) - the catalytic core - and CF(0) - the membrane proton channel. CF(1) has five subunits: alpha(3), beta(3), gamma(1), delta(1), epsilon(1). CF(0) has four main subunits: a(1), b(1), b'(1) and c(9-12).

It localises to the cellular thylakoid membrane. The catalysed reaction is ATP + H2O + 4 H(+)(in) = ADP + phosphate + 5 H(+)(out). Its function is as follows. Produces ATP from ADP in the presence of a proton gradient across the membrane. The alpha chain is a regulatory subunit. The sequence is that of ATP synthase subunit alpha from Synechococcus sp. (strain ATCC 27144 / PCC 6301 / SAUG 1402/1) (Anacystis nidulans).